The sequence spans 238 residues: 5'-deoxynucleotidase YBR242W (238 aa).

Residues 77-183 (ISDHMYRLSI…VKDIDKYEML (107 aa)) form the HD domain. A divalent metal cation contacts are provided by His80, His108, Asp109, Glu112, Asp117, Ile118, and Asp178.

It belongs to the HDDC2 family. As to quaternary structure, homodimer. The cofactor is Mn(2+). It depends on Co(2+) as a cofactor. Mg(2+) serves as cofactor.

The catalysed reaction is a 2'-deoxyribonucleoside 5'-phosphate + H2O = a 2'-deoxyribonucleoside + phosphate. In terms of biological role, catalyzes the dephosphorylation of the nucleoside 5'-monophosphates deoxyadenosine monophosphate (dAMP), deoxycytidine monophosphate (dCMP), deoxyguanosine monophosphate (dGMP) and deoxythymidine monophosphate (dTMP). This is 5'-deoxynucleotidase YBR242W from Saccharomyces cerevisiae (strain ATCC 204508 / S288c) (Baker's yeast).